Here is a 117-residue protein sequence, read N- to C-terminus: Large ribosomal subunit protein bL19 (117 aa).

The protein belongs to the bacterial ribosomal protein bL19 family.

This protein is located at the 30S-50S ribosomal subunit interface and may play a role in the structure and function of the aminoacyl-tRNA binding site. This is Large ribosomal subunit protein bL19 from Vibrio campbellii (strain ATCC BAA-1116).